The primary structure comprises 99 residues: uncharacterized protein (99 aa).

This is an uncharacterized protein from Saccharolobus islandicus (Sulfolobus islandicus).